The chain runs to 525 residues: GMP synthase [glutamine-hydrolyzing] (525 aa).

A Glutamine amidotransferase type-1 domain is found at 9–207 (RILILDFGSQ…VRDICQCEAL (199 aa)). The Nucleophile role is filled by cysteine 86. Residues histidine 181 and glutamate 183 contribute to the active site. Residues 208–400 (WTPAKIIDDA…LGLPYDMLYR (193 aa)) form the GMPS ATP-PPase domain. 235 to 241 (SGGVDSS) lines the ATP pocket.

Homodimer.

The enzyme catalyses XMP + L-glutamine + ATP + H2O = GMP + L-glutamate + AMP + diphosphate + 2 H(+). The protein operates within purine metabolism; GMP biosynthesis; GMP from XMP (L-Gln route): step 1/1. In terms of biological role, catalyzes the synthesis of GMP from XMP. This Shigella boydii serotype 18 (strain CDC 3083-94 / BS512) protein is GMP synthase [glutamine-hydrolyzing].